Reading from the N-terminus, the 374-residue chain is Putative glutamate--cysteine ligase 2 (374 aa).

Belongs to the glutamate--cysteine ligase type 2 family. YbdK subfamily.

It carries out the reaction L-cysteine + L-glutamate + ATP = gamma-L-glutamyl-L-cysteine + ADP + phosphate + H(+). Functionally, ATP-dependent carboxylate-amine ligase which exhibits weak glutamate--cysteine ligase activity. The chain is Putative glutamate--cysteine ligase 2 from Paracidovorax citrulli (strain AAC00-1) (Acidovorax citrulli).